A 170-amino-acid chain; its full sequence is tRNA-splicing endonuclease (170 aa).

Catalysis depends on residues Tyr-110, His-116, and Lys-147.

The protein belongs to the tRNA-intron endonuclease family. Archaeal short subfamily. As to quaternary structure, homotetramer; although the tetramer contains four active sites, only two participate in the cleavage. Therefore, it should be considered as a dimer of dimers.

The enzyme catalyses pretRNA = a 3'-half-tRNA molecule with a 5'-OH end + a 5'-half-tRNA molecule with a 2',3'-cyclic phosphate end + an intron with a 2',3'-cyclic phosphate and a 5'-hydroxyl terminus.. Its function is as follows. Endonuclease that removes tRNA introns. Cleaves pre-tRNA at the 5'- and 3'-splice sites to release the intron. The products are an intron and two tRNA half-molecules bearing 2',3' cyclic phosphate and 5'-OH termini. Recognizes a pseudosymmetric substrate in which 2 bulged loops of 3 bases are separated by a stem of 4 bp. The protein is tRNA-splicing endonuclease of Pyrococcus abyssi (strain GE5 / Orsay).